We begin with the raw amino-acid sequence, 550 residues long: Rab GTPase-activating protein 22 (550 aa).

Residues 1–49 (MKALRRSYTSTSSGNSSSSSSLPSSSSSSLPSSSSSSPPSSNSNSYSNS) form a disordered region. Over residues 7 to 49 (SYTSTSSGNSSSSSSLPSSSSSSLPSSSSSSPPSSNSNSYSNS) the composition is skewed to low complexity. Residues 126–460 (GVDPSIRAEV…CLWEVMWADQ (335 aa)) form the Rab-GAP TBC domain.

As to quaternary structure, interacts with AGT1 in peroxisome under biotic stress conditions. As to expression, expressed in root meristems, vascular tissues, guard cells, trichomes, styles and receptacles.

Its subcellular location is the nucleus. The protein resides in the peroxisome. Its function is as follows. Involved in defense response against fungal and bacterial pathogens. Acts as a negative regulator of jasmonate (JA) responses during infection by the soil-born fungal pathogen Verticillium longisporum. Involved in abscisic acid-dependent stomata closure in response to infection by V.longisporum and Pseudomonas syringae. May be a downstream component of brassinosteroid-mediated signaling. This Arabidopsis thaliana (Mouse-ear cress) protein is Rab GTPase-activating protein 22.